Consider the following 629-residue polypeptide: tRNA uridine 5-carboxymethylaminomethyl modification enzyme MnmG (629 aa).

FAD contacts are provided by residues 13 to 18 (GGGHAG), valine 125, and serine 180. 273-287 (GPRYCPSIEDKIHRF) contributes to the NAD(+) binding site. Glutamine 370 contacts FAD.

The protein belongs to the MnmG family. Homodimer. Heterotetramer of two MnmE and two MnmG subunits. FAD is required as a cofactor.

The protein localises to the cytoplasm. NAD-binding protein involved in the addition of a carboxymethylaminomethyl (cmnm) group at the wobble position (U34) of certain tRNAs, forming tRNA-cmnm(5)s(2)U34. The sequence is that of tRNA uridine 5-carboxymethylaminomethyl modification enzyme MnmG from Shewanella sp. (strain MR-7).